Reading from the N-terminus, the 357-residue chain is IGF-like family receptor 1 (357 aa).

The signal sequence occupies residues 1–22; sequence MGPLRLLPTAVLLLAQAAPWEA. Topologically, residues 23–160 are extracellular; that stretch reads SQHCGRLEYW…HKAPQQAWPS (138 aa). Residues 100–147 are disordered; it reads IPSGSRGGTGRPCREPVPNKEPCPLTPGKSSILSSQEPSSPGIPSVSW. Residues 129–139 show a composition bias toward low complexity; it reads SSILSSQEPSS. A helical transmembrane segment spans residues 161–181; sequence LSFALFLVLVLLVTSAIILLA. At 182–357 the chain is on the cytoplasmic side; that stretch reads LQRHHRRLDQ…KLGSSGACLA (176 aa).

The protein localises to the cell membrane. Functionally, probable cell membrane receptor for the IGF-like family protein IGFL. This is IGF-like family receptor 1 (IGFLR1) from Bos taurus (Bovine).